We begin with the raw amino-acid sequence, 394 residues long: Phosphopentomutase (394 aa).

Mn(2+)-binding residues include Asp13, Asp286, His291, Asp327, His328, and His339.

This sequence belongs to the phosphopentomutase family. The cofactor is Mn(2+).

It localises to the cytoplasm. It carries out the reaction 2-deoxy-alpha-D-ribose 1-phosphate = 2-deoxy-D-ribose 5-phosphate. The catalysed reaction is alpha-D-ribose 1-phosphate = D-ribose 5-phosphate. Its pathway is carbohydrate degradation; 2-deoxy-D-ribose 1-phosphate degradation; D-glyceraldehyde 3-phosphate and acetaldehyde from 2-deoxy-alpha-D-ribose 1-phosphate: step 1/2. In terms of biological role, isomerase that catalyzes the conversion of deoxy-ribose 1-phosphate (dRib-1-P) and ribose 1-phosphate (Rib-1-P) to deoxy-ribose 5-phosphate (dRib-5-P) and ribose 5-phosphate (Rib-5-P), respectively. The chain is Phosphopentomutase from Bacillus cereus (strain AH187).